We begin with the raw amino-acid sequence, 346 residues long: Holliday junction branch migration complex subunit RuvB (346 aa).

Positions 1–182 (MSEPARLISP…FGIPVRLTFY (182 aa)) are large ATPase domain (RuvB-L). ATP contacts are provided by residues L21, R22, G63, K66, T67, T68, 129–131 (EDY), R172, Y182, and R219. T67 contacts Mg(2+). The interval 183 to 253 (TVEELELIVR…IADEALTRLL (71 aa)) is small ATPAse domain (RuvB-S). Residues 256-346 (NVGFDQLDKR…AQFRLFQEDD (91 aa)) are head domain (RuvB-H). DNA is bound by residues R292, R311, and R316.

The protein belongs to the RuvB family. In terms of assembly, homohexamer. Forms an RuvA(8)-RuvB(12)-Holliday junction (HJ) complex. HJ DNA is sandwiched between 2 RuvA tetramers; dsDNA enters through RuvA and exits via RuvB. An RuvB hexamer assembles on each DNA strand where it exits the tetramer. Each RuvB hexamer is contacted by two RuvA subunits (via domain III) on 2 adjacent RuvB subunits; this complex drives branch migration. In the full resolvosome a probable DNA-RuvA(4)-RuvB(12)-RuvC(2) complex forms which resolves the HJ.

The protein localises to the cytoplasm. It carries out the reaction ATP + H2O = ADP + phosphate + H(+). The RuvA-RuvB-RuvC complex processes Holliday junction (HJ) DNA during genetic recombination and DNA repair, while the RuvA-RuvB complex plays an important role in the rescue of blocked DNA replication forks via replication fork reversal (RFR). RuvA specifically binds to HJ cruciform DNA, conferring on it an open structure. The RuvB hexamer acts as an ATP-dependent pump, pulling dsDNA into and through the RuvAB complex. RuvB forms 2 homohexamers on either side of HJ DNA bound by 1 or 2 RuvA tetramers; 4 subunits per hexamer contact DNA at a time. Coordinated motions by a converter formed by DNA-disengaged RuvB subunits stimulates ATP hydrolysis and nucleotide exchange. Immobilization of the converter enables RuvB to convert the ATP-contained energy into a lever motion, pulling 2 nucleotides of DNA out of the RuvA tetramer per ATP hydrolyzed, thus driving DNA branch migration. The RuvB motors rotate together with the DNA substrate, which together with the progressing nucleotide cycle form the mechanistic basis for DNA recombination by continuous HJ branch migration. Branch migration allows RuvC to scan DNA until it finds its consensus sequence, where it cleaves and resolves cruciform DNA. The protein is Holliday junction branch migration complex subunit RuvB of Rhizobium etli (strain ATCC 51251 / DSM 11541 / JCM 21823 / NBRC 15573 / CFN 42).